Consider the following 129-residue polypeptide: Small ribosomal subunit protein uS9 (129 aa).

The protein belongs to the universal ribosomal protein uS9 family.

The chain is Small ribosomal subunit protein uS9 from Chlorobium chlorochromatii (strain CaD3).